Consider the following 571-residue polypeptide: Septation ring formation regulator EzrA (571 aa).

The Extracellular segment spans residues 1 to 3 (MYY). The helical transmembrane segment at 4-22 (MLIGFIIVVIAVISAGYIL) threads the bilayer. Topologically, residues 23-571 (KRKHYQRINE…ESKVSVDDIE (549 aa)) are cytoplasmic. 5 coiled-coil regions span residues 170–215 (EAKL…QMER), 248–299 (LAQM…TLEH), 326–374 (DALA…ASGE), 400–437 (NFAEELRSLRKDELEARDDAERMRRAIITLDRKMERER), and 478–529 (RIAE…ENHF).

The protein belongs to the EzrA family.

Its subcellular location is the cell membrane. Negative regulator of FtsZ ring formation; modulates the frequency and position of FtsZ ring formation. Inhibits FtsZ ring formation at polar sites. Interacts either with FtsZ or with one of its binding partners to promote depolymerization. This is Septation ring formation regulator EzrA from Listeria innocua serovar 6a (strain ATCC BAA-680 / CLIP 11262).